The chain runs to 135 residues: Fatty acid-binding protein 5 (135 aa).

N-acetylalanine is present on A2. K17 is modified (N6-acetyllysine). A Phosphotyrosine; by Tyr-kinases modification is found at Y22. The short motif at 24-34 (KEVGVGMALRK) is the Nuclear localization signal element. N-eicosanoyl ethanolamine contacts are provided by C43 and R109. C120 and C127 are disulfide-bonded. (9Z,12Z)-octadecadienoate is bound at residue 129–131 (RVY). Residue Y131 coordinates N-eicosanoyl ethanolamine. Residue Y131 coordinates hexadecanoate. Position 131 is a phosphotyrosine (Y131).

This sequence belongs to the calycin superfamily. Fatty-acid binding protein (FABP) family. In terms of assembly, monomer. Most abundant in lens and retina (found in the mueller cells), moderately abundant in heart and testis (found in the Sertoli cells), and present in very low amounts in lung.

Its subcellular location is the cytoplasm. It localises to the nucleus. The protein localises to the synapse. It is found in the postsynaptic density. The protein resides in the secreted. It catalyses the reaction hexadecanoate(out) = hexadecanoate(in). The catalysed reaction is (9Z,12Z)-octadecadienoate(out) = (9Z,12Z)-octadecadienoate(in). It carries out the reaction (9Z)-octadecenoate(out) = (9Z)-octadecenoate(in). Functionally, intracellular carrier for long-chain fatty acids and related active lipids, such as endocannabinoids, that regulate the metabolism and actions of the ligands they bind. In addition to the cytosolic transport, selectively delivers specific fatty acids from the cytosol to the nucleus, wherein they activate nuclear receptors. Delivers retinoic acid to the nuclear receptor peroxisome proliferator-activated receptor delta; which promotes proliferation and survival. May also serve as a synaptic carrier of endocannabinoid at central synapses and thus controls retrograde endocannabinoid signaling. Modulates inflammation by regulating PTGES induction via NF-kappa-B activation, and prostaglandin E2 (PGE2) biosynthesis during inflammation. This is Fatty acid-binding protein 5 (FABP5) from Bos taurus (Bovine).